The following is a 446-amino-acid chain: Tubulin gamma chain (446 aa).

142–148 (AGGTGSG) contributes to the GTP binding site.

The protein belongs to the tubulin family. In terms of assembly, interacts with mto1. Interacts with mto2.

The protein resides in the cytoplasm. The protein localises to the cytoskeleton. It is found in the microtubule organizing center. Its subcellular location is the spindle pole body. In terms of biological role, tubulin is the major constituent of microtubules. The gamma chain is found at microtubule organizing centers (MTOC) such as the spindle poles or the centrosome, suggesting that it is involved in the minus-end nucleation of microtubule assembly. This chain is Tubulin gamma chain, found in Schizosaccharomyces pombe (strain 972 / ATCC 24843) (Fission yeast).